Consider the following 253-residue polypeptide: Cholesterol ring-cleaving hydrolase IpdB subunit (253 aa).

The protein belongs to the 3-oxoacid CoA-transferase subunit B family. As to quaternary structure, heterotetramer composed of 2 IpdA subunits and 2 IpdB subunits.

It carries out the reaction (3E)-2-(2-carboxylatoethyl)-3-methyl-6-oxocyclohex-1-ene-1-carboxyl-CoA + H2O = 6-methyl-3,7-dioxodecanedioyl-CoA. The protein operates within steroid metabolism; cholesterol degradation. Functionally, involved in the final steps of cholesterol and steroid degradation. Opens the last steroid ring of cholesterol by catalyzing the hydrolysis of (3E)-2-(2-carboxylatoethyl)-3-methyl-6-oxocyclohex-1-ene-1-carboxyl-CoA (COCHEA-CoA) to 6-methyl-3,7-dioxodecanedioyl-CoA (MeDODA-CoA). The protein is Cholesterol ring-cleaving hydrolase IpdB subunit of Rhodococcus jostii (strain RHA1).